We begin with the raw amino-acid sequence, 517 residues long: T-box transcription factor TBX5 (517 aa).

Residues 1–46 (MADADEGFGLARTPLEPDSKDRSCDSKPESALGAPSKSPSSPQAAF) are disordered. Over residues 15–28 (LEPDSKDRSCDSKP) the composition is skewed to basic and acidic residues. Low complexity predominate over residues 34 to 45 (APSKSPSSPQAA). A DNA-binding region (T-box) is located at residues 58–238 (LHERELWLKF…NNPFAKGFRG (181 aa)). 2 disordered regions span residues 270-313 (HSPF…YPLA) and 331-369 (SSTEHPYKKPYMETSPSEEDTFYRSGYPQQQGLSTSYRT). Residues 271–300 (SPFSSETRALSTSSNLGSQYQCENGVSGPS) are compositionally biased toward polar residues. At lysine 338 the chain carries N6-acetyllysine. Positions 357–369 (YPQQQGLSTSYRT) are enriched in polar residues.

Monomer. Homodimer (via the T-box); binds DNA as homodimer. Interacts (via the T-box) with NKX2-5 (via the homeobox); this complex binds DNA. Interacts with GATA4. Interacts with KAT2A and KAT2B. Acetylation at Lys-338 by KAT2A and KAT2B promotes nuclear retention.

Its subcellular location is the nucleus. The protein resides in the cytoplasm. DNA-binding protein that regulates the transcription of several genes and is involved in heart development and limb pattern formation. Binds to the core DNA motif of NPPA promoter. The chain is T-box transcription factor TBX5 (Tbx5) from Rattus norvegicus (Rat).